The sequence spans 789 residues: Aryl hydrocarbon receptor nuclear translocator (789 aa).

Polar residues predominate over residues 1–14 (MAATTANPEMTSDV). A disordered region spans residues 1-97 (MAATTANPEM…RLARENHSEI (97 aa)). A2 is subject to N-acetylalanine. The segment covering 26–35 (SGPGIQGGGA) has biased composition (gly residues). A Glycyl lysine isopeptide (Lys-Gly) (interchain with G-Cter in SUMO2) cross-link involves residue K58. The segment covering 60–97 (LRCDDDQMSNDKERFARSDDEQSSADKERLARENHSEI) has biased composition (basic and acidic residues). S77 carries the post-translational modification Phosphoserine. Residues 88–128 (RLARENHSEIERRRRNKMTAYITELSDMVPTCSALARKPDK) form a DNA-binding region. Residues 89–142 (LARENHSEIERRRRNKMTAYITELSDMVPTCSALARKPDKLTILRMAVSHMKSL) enclose the bHLH domain. The interval 112–168 (LSDMVPTCSALARKPDKLTILRMAVSHMKSLRGTGNTSTDGSYKPSFLTDQELKHLI) is required for heterodimer formation with HIF1A. The segment at 112 to 264 (LSDMVPTCSA…MCMGSRRSFI (153 aa)) is required for heterodimer formation with EPAS1. 2 PAS domains span residues 161-235 (DQEL…LTGR) and 349-419 (PNCT…VKLK). The interval 167-171 (LILEA) is mediates the transcription activity and dimerization of the AHR:ARNT complex. The 44-residue stretch at 424 to 467 (SVMFRFRSKNQEWLWMRTSSFTFQNPYSDEIEYIICTNTNVKNS) folds into the PAC domain. The span at 465–481 (KNSSQEPRPTLSNTIQR) shows a compositional bias: polar residues. Disordered regions lie at residues 465 to 492 (KNSSQEPRPTLSNTIQRPQLGPTANLPL) and 672 to 789 (TPSS…PFSE). Residues 672-696 (TPSSFSSMSLPGAPTASPGAAAYPS) are compositionally biased toward low complexity. Residues 708–719 (TGQTAGQFQTRT) show a composition bias toward polar residues. Composition is skewed to low complexity over residues 723-733 (VGVWPQWQGQQ) and 743-756 (QHVQQPPAQQPGQP).

Monomer. Homodimer only upon binding to a DNA. Efficient DNA binding requires dimerization with another bHLH protein. Interacts with TACC3. Interacts with HIF1A, EPAS1, NPAS1 and NPAS3; forms a heterodimer that binds core DNA sequence 5'-TACGTG-3' within the hypoxia response element (HRE) of target gene promoters. Forms a heterodimer with AHRR, as well as with other bHLH proteins. Interacts with NOCA7. Interacts with TACC3. Interacts with AHR; the heterodimer ARNT:AHR binds to core DNA sequence 5'-TGCGTG-3' within the dioxin response element (DRE) of target gene promoters and activates their transcription. Interacts with SIM1 and NPAS4.

Its subcellular location is the nucleus. In terms of biological role, required for activity of the AHR. Upon ligand binding, AHR translocates into the nucleus, where it heterodimerizes with ARNT and induces transcription by binding to xenobiotic response elements (XRE). Not required for the ligand-binding subunit to translocate from the cytosol to the nucleus after ligand binding. The complex initiates transcription of genes involved in the regulation of a variety of biological processes, including angiogenesis, hematopoiesis, drug and lipid metabolism, cell motility and immune modulation. The heterodimer binds to core DNA sequence 5'-TACGTG-3' within the hypoxia response element (HRE) of target gene promoters and functions as a transcriptional regulator of the adaptive response to hypoxia. The heterodimer ARNT:AHR binds to core DNA sequence 5'-TGCGTG-3' within the dioxin response element (DRE) of target gene promoters and activates their transcription. This is Aryl hydrocarbon receptor nuclear translocator from Homo sapiens (Human).